Consider the following 234-residue polypeptide: Ubiquinone biosynthesis O-methyltransferase (234 aa).

S-adenosyl-L-methionine contacts are provided by Arg-39, Gly-59, Asp-80, and Met-124.

Belongs to the methyltransferase superfamily. UbiG/COQ3 family.

It carries out the reaction a 3-demethylubiquinol + S-adenosyl-L-methionine = a ubiquinol + S-adenosyl-L-homocysteine + H(+). It catalyses the reaction a 3-(all-trans-polyprenyl)benzene-1,2-diol + S-adenosyl-L-methionine = a 2-methoxy-6-(all-trans-polyprenyl)phenol + S-adenosyl-L-homocysteine + H(+). Its pathway is cofactor biosynthesis; ubiquinone biosynthesis. In terms of biological role, O-methyltransferase that catalyzes the 2 O-methylation steps in the ubiquinone biosynthetic pathway. The sequence is that of Ubiquinone biosynthesis O-methyltransferase from Aliivibrio fischeri (strain ATCC 700601 / ES114) (Vibrio fischeri).